Consider the following 293-residue polypeptide: Serine/threonine-protein phosphatase 2A catalytic subunit beta isoform (293 aa).

Asp41, His43, Asp69, and Asn101 together coordinate Mn(2+). Catalysis depends on His102, which acts as the Proton donor. Positions 151 and 225 each coordinate Mn(2+). Residue Tyr291 is modified to Phosphotyrosine. Residue Leu293 is modified to Leucine methyl ester.

The protein belongs to the PPP phosphatase family. PP-1 subfamily. Found in a complex with at least ARL2, PPP2CB, PPP2R1A, PPP2R2A, PPP2R5E and TBCD. Interacts with TBCD. PP2A consists of a common heterodimeric core enzyme (composed of a 36 kDa catalytic subunit (subunit C) and a 65 kDa constant regulatory subunit (PR65) (subunit A)) that associates with a variety of regulatory subunits. Proteins that associate with the core dimer include three families of regulatory subunits B (the R2/B/PR55/B55, R3/B''/PR72/PR130/PR59 and R5/B'/B56 families), the 48 kDa variable regulatory subunit, viral proteins, and cell signaling molecules. Binds PPME1. May indirectly interact with SGO1, most probably through regulatory B56 subunits. Interacts with CTTNBP2NL. Interacts with PTPA. Part of the core of STRIPAK complexes composed of PP2A catalytic and scaffolding subunits, the striatins (PP2A regulatory subunits), the striatin-associated proteins MOB4, STRIP1 and STRIP2, PDCD10 and members of the STE20 kinases, such as STK24 and STK26. Mn(2+) serves as cofactor. Post-translationally, reversibly methyl esterified on Leu-293 by leucine carboxyl methyltransferase 1 (Lcmt1) and protein phosphatase methylesterase 1 (PPME1). Carboxyl methylation influences the affinity of the catalytic subunit for the different regulatory subunits, thereby modulating the PP2A holoenzyme's substrate specificity, enzyme activity and cellular localization. In terms of processing, phosphorylation of either threonine (by autophosphorylation-activated protein kinase) or tyrosine results in inactivation of the phosphatase. Auto-dephosphorylation has been suggested as a mechanism for reactivation. May be monoubiquitinated by NOSIP.

It localises to the cytoplasm. It is found in the nucleus. The protein resides in the chromosome. The protein localises to the centromere. Its subcellular location is the cytoskeleton. It localises to the spindle pole. It catalyses the reaction O-phospho-L-seryl-[protein] + H2O = L-seryl-[protein] + phosphate. It carries out the reaction O-phospho-L-threonyl-[protein] + H2O = L-threonyl-[protein] + phosphate. Its function is as follows. Catalytic subunit of protein phosphatase 2A (PP2A), a serine/threonine phosphatase involved in the regulation of a wide variety of enzymes, signal transduction pathways, and cellular events. PP2A can modulate the activity of phosphorylase B kinase, casein kinase 2, mitogen-stimulated S6 kinase, and MAP-2 kinase. Part of the striatin-interacting phosphatase and kinase (STRIPAK) complexes. STRIPAK complexes have critical roles in protein (de)phosphorylation and are regulators of multiple signaling pathways including Hippo, MAPK, nuclear receptor and cytoskeleton remodeling. Different types of STRIPAK complexes are involved in a variety of biological processes such as cell growth, differentiation, apoptosis, metabolism and immune regulation. The chain is Serine/threonine-protein phosphatase 2A catalytic subunit beta isoform (PPP2CB) from Sus scrofa (Pig).